The chain runs to 198 residues: Regulation of enolase protein 1 (198 aa).

The protein resides in the cytoplasm. In terms of biological role, functions in the galactose metabolic pathway via the GAL83 protein and that it may control the level of ENO1. The polypeptide is Regulation of enolase protein 1 (REE1) (Saccharomyces cerevisiae (strain ATCC 204508 / S288c) (Baker's yeast)).